The chain runs to 54 residues: MARNEVRPVIKLRSTAGTGYTYVTRKNRRNDPDRMVLRKYDPVARRHVDFREER.

The protein belongs to the bacterial ribosomal protein bL33 family.

This chain is Large ribosomal subunit protein bL33A, found in Streptomyces griseus subsp. griseus (strain JCM 4626 / CBS 651.72 / NBRC 13350 / KCC S-0626 / ISP 5235).